The following is a 311-amino-acid chain: tRNA-cytidine(32) 2-sulfurtransferase (311 aa).

Residues 47 to 52 (SGGKDS) carry the PP-loop motif motif. [4Fe-4S] cluster is bound by residues Cys122, Cys125, and Cys213.

The protein belongs to the TtcA family. Homodimer. Mg(2+) serves as cofactor. [4Fe-4S] cluster is required as a cofactor.

Its subcellular location is the cytoplasm. It carries out the reaction cytidine(32) in tRNA + S-sulfanyl-L-cysteinyl-[cysteine desulfurase] + AH2 + ATP = 2-thiocytidine(32) in tRNA + L-cysteinyl-[cysteine desulfurase] + A + AMP + diphosphate + H(+). It participates in tRNA modification. Catalyzes the ATP-dependent 2-thiolation of cytidine in position 32 of tRNA, to form 2-thiocytidine (s(2)C32). The sulfur atoms are provided by the cysteine/cysteine desulfurase (IscS) system. The protein is tRNA-cytidine(32) 2-sulfurtransferase of Shigella dysenteriae serotype 1 (strain Sd197).